We begin with the raw amino-acid sequence, 72 residues long: Translation initiation factor IF-1 (72 aa).

The S1-like domain occupies 1-72 (MSKEDVIEVE…TRGRITWRAK (72 aa)).

This sequence belongs to the IF-1 family. As to quaternary structure, component of the 30S ribosomal translation pre-initiation complex which assembles on the 30S ribosome in the order IF-2 and IF-3, IF-1 and N-formylmethionyl-tRNA(fMet); mRNA recruitment can occur at any time during PIC assembly.

It is found in the cytoplasm. Functionally, one of the essential components for the initiation of protein synthesis. Stabilizes the binding of IF-2 and IF-3 on the 30S subunit to which N-formylmethionyl-tRNA(fMet) subsequently binds. Helps modulate mRNA selection, yielding the 30S pre-initiation complex (PIC). Upon addition of the 50S ribosomal subunit IF-1, IF-2 and IF-3 are released leaving the mature 70S translation initiation complex. This chain is Translation initiation factor IF-1, found in Acetivibrio thermocellus (strain ATCC 27405 / DSM 1237 / JCM 9322 / NBRC 103400 / NCIMB 10682 / NRRL B-4536 / VPI 7372) (Clostridium thermocellum).